A 223-amino-acid chain; its full sequence is Interleukin-12 subunit alpha (223 aa).

An N-terminal signal peptide occupies residues 1-23; that stretch reads MCPSARSLLLLASLVLLEHLGSA. Residues asparagine 41, asparagine 79, asparagine 121, and asparagine 176 are each glycosylated (N-linked (GlcNAc...) asparagine). 2 cysteine pairs are disulfide-bonded: cysteine 66/cysteine 200 and cysteine 87/cysteine 125.

This sequence belongs to the IL-6 superfamily. As to quaternary structure, heterodimer with IL12B; disulfide-linked. This heterodimer is known as interleukin IL-12. Heterodimer with EBI3/IL27B; not disulfide-linked. This heterodimer is known as interleukin IL-35. Interacts with NBR1; this interaction promotes IL-12 secretion.

The protein localises to the secreted. Heterodimerizes with IL12B to form the IL-12 cytokine or with EBI3/IL27B to form the IL-35 cytokine. IL-12 is primarily produced by professional antigen-presenting cells (APCs) such as B-cells and dendritic cells (DCs) as well as macrophages and granulocytes and regulates T-cell and natural killer-cell responses, induces the production of interferon-gamma (IFN-gamma), favors the differentiation of T-helper 1 (Th1) cells and is an important link between innate resistance and adaptive immunity. Mechanistically, exerts its biological effects through a receptor composed of IL12R1 and IL12R2 subunits. Binding to the receptor results in the rapid tyrosine phosphorylation of a number of cellular substrates including the JAK family kinases TYK2 and JAK2. In turn, recruited STAT4 gets phosphorylated and translocates to the nucleus where it regulates cytokine/growth factor responsive genes. As part of IL-35, plays essential roles in maintaining the immune homeostasis of the liver microenvironment and also functions as an immune-suppressive cytokine. Mediates biological events through unconventional receptors composed of IL12RB2 and gp130/IL6ST heterodimers or homodimers. Signaling requires the transcription factors STAT1 and STAT4, which form a unique heterodimer that binds to distinct DNA sites. This Marmota monax (Woodchuck) protein is Interleukin-12 subunit alpha (IL12A).